The chain runs to 537 residues: Beta-1-syntrophin (537 aa).

An N-acetylalanine modification is found at alanine 2. 2 consecutive PH domains span residues 18-297 and 321-432; these read RAQR…SNAG and EIRH…QGCH. 3 positions are modified to phosphoserine: serine 86, serine 125, and serine 204. Positions 111–194 constitute a PDZ domain; the sequence is GVKVLKQELG…EVLLEVKYMR (84 aa). The interval 204–233 is disordered; the sequence is SPVSEIGWETPPPESPRLGGGSAEPLSSQS. A Phosphothreonine modification is found at threonine 213. Serine 218, serine 225, serine 231, serine 235, and serine 388 each carry phosphoserine. One can recognise an SU domain in the interval 481-537; it reads PYEKLKMSSDDGIRMLYLDFGGKEGEIQLDLHSCPKPIVFIIHSFLSAKITRLGLVA. Residues 517–537 form a calmodulin-binding region; that stretch reads PIVFIIHSFLSAKITRLGLVA.

This sequence belongs to the syntrophin family. In terms of assembly, monomer and homodimer. Interacts with the viral HTLV-1 TAX protein and other members of the syntrophin family: SNTA1 and SNTB2. Interacts with the dystrophin protein DMD and related proteins DTNA and UTRN and with the sodium channel proteins SCN4A and SCN5A. Interacts with DTNB. Post-translationally, phosphorylated by CaM-kinase II. As to expression, ubiquitous. Expressed at high levels in the liver.

The protein localises to the cell membrane. The protein resides in the sarcolemma. Its subcellular location is the cell junction. It is found in the cytoplasm. It localises to the cytoskeleton. Functionally, adapter protein that binds to and probably organizes the subcellular localization of a variety of membrane proteins. May link various receptors to the actin cytoskeleton and the dystrophin glycoprotein complex. This chain is Beta-1-syntrophin (Sntb1), found in Mus musculus (Mouse).